A 206-amino-acid chain; its full sequence is Ribosomal RNA small subunit methyltransferase G (206 aa).

Residues Gly-73, Leu-78, 124–125, and Arg-139 each bind S-adenosyl-L-methionine; that span reads VE.

Belongs to the methyltransferase superfamily. RNA methyltransferase RsmG family.

The protein localises to the cytoplasm. The enzyme catalyses guanosine(527) in 16S rRNA + S-adenosyl-L-methionine = N(7)-methylguanosine(527) in 16S rRNA + S-adenosyl-L-homocysteine. Its function is as follows. Specifically methylates the N7 position of guanine in position 527 of 16S rRNA. In Serratia proteamaculans (strain 568), this protein is Ribosomal RNA small subunit methyltransferase G.